A 388-amino-acid chain; its full sequence is Formate-dependent phosphoribosylglycinamide formyltransferase (388 aa).

N(1)-(5-phospho-beta-D-ribosyl)glycinamide contacts are provided by residues 20–21 (EL) and Glu-80. Residues Arg-112, Lys-153, 158–163 (SSGKGQ), 193–196 (EEFI), and Glu-201 each bind ATP. The region spanning 117–306 (RLAFEKLGLR…EFEIHARAIL (190 aa)) is the ATP-grasp domain. Mg(2+)-binding residues include Glu-265 and Glu-277. Residues Asp-284, Lys-352, and 359-360 (RR) contribute to the N(1)-(5-phospho-beta-D-ribosyl)glycinamide site.

This sequence belongs to the PurK/PurT family. In terms of assembly, homodimer.

The catalysed reaction is N(1)-(5-phospho-beta-D-ribosyl)glycinamide + formate + ATP = N(2)-formyl-N(1)-(5-phospho-beta-D-ribosyl)glycinamide + ADP + phosphate + H(+). Its pathway is purine metabolism; IMP biosynthesis via de novo pathway; N(2)-formyl-N(1)-(5-phospho-D-ribosyl)glycinamide from N(1)-(5-phospho-D-ribosyl)glycinamide (formate route): step 1/1. Functionally, involved in the de novo purine biosynthesis. Catalyzes the transfer of formate to 5-phospho-ribosyl-glycinamide (GAR), producing 5-phospho-ribosyl-N-formylglycinamide (FGAR). Formate is provided by PurU via hydrolysis of 10-formyl-tetrahydrofolate. The chain is Formate-dependent phosphoribosylglycinamide formyltransferase from Methanococcus maripaludis (strain C7 / ATCC BAA-1331).